A 143-amino-acid polypeptide reads, in one-letter code: Hemoglobin subunit alpha-2 (143 aa).

Ser2 carries the post-translational modification N-acetylserine. The Globin domain maps to 2–143 (SLSTKDKDTV…LARALSEKYR (142 aa)). 2 residues coordinate heme b: His60 and His89.

It belongs to the globin family. As to quaternary structure, hb 2 is a heterotetramer of two alpha-2 and two beta chains. As to expression, red blood cells.

Functionally, involved in oxygen transport from gills to the various peripheral tissues. The protein is Hemoglobin subunit alpha-2 of Cottoperca gobio (Frogmouth).